An 87-amino-acid polypeptide reads, in one-letter code: Small ribosomal subunit protein bS20 (87 aa).

The span at 1 to 11 (MANHKSALKRI) shows a compositional bias: basic residues. Positions 1-23 (MANHKSALKRIKQTEKRTERNRH) are disordered.

Belongs to the bacterial ribosomal protein bS20 family.

Its function is as follows. Binds directly to 16S ribosomal RNA. This Geotalea daltonii (strain DSM 22248 / JCM 15807 / FRC-32) (Geobacter daltonii) protein is Small ribosomal subunit protein bS20.